The chain runs to 481 residues: MMSEVRVRFAPSPTGSLHIGGARTALFNWLFARHHGGKFILRVDDTDLERSTEESMRGILEGLQWLGIDWDEGPIYQSQRLDEYRKFANKLLEEGKAYYCFCTKEELEEMRKQAEREGRPFMYTGKCRNLTKEQIENYLKEGKKPVIRLKTPREGKTVVHDIIRGDVEFDNSTIDDFIIMKSDGMPTYNFATVVDDYQMGITHIIRAEEHLSNTPKQILIYEALGVPLPQFAHVSMVLAPDRTKLSKRHGATSVQEFRDQGYLPEAIVNYITLLGWAPLDGEEIFDVRKSIREFSLERVSKNPAVYDVQKLTWINGHYIRSYDLDKLTQAIIPFLQKKGLIGENYDYEYIKKIVSVVREREKTLVDIADAMTYYFKEVESYEEKGVQKYFTKEGVVDILKKAAETLKNLEPFNKFTAEEAYRKLVEELGISSSALFHPTRLAISGRTFGPGLFDIMEFLGKEKTVARIERAIKFIEENIKG.

A 'HIGH' region motif is present at residues 11–21; sequence PSPTGSLHIGG. The 'KMSKS' region signature appears at 244–248; the sequence is KLSKR. K247 provides a ligand contact to ATP.

Belongs to the class-I aminoacyl-tRNA synthetase family. Glutamate--tRNA ligase type 1 subfamily. In terms of assembly, monomer.

Its subcellular location is the cytoplasm. It catalyses the reaction tRNA(Glu) + L-glutamate + ATP = L-glutamyl-tRNA(Glu) + AMP + diphosphate. In terms of biological role, catalyzes the attachment of glutamate to tRNA(Glu) in a two-step reaction: glutamate is first activated by ATP to form Glu-AMP and then transferred to the acceptor end of tRNA(Glu). The chain is Glutamate--tRNA ligase 1 from Caldanaerobacter subterraneus subsp. tengcongensis (strain DSM 15242 / JCM 11007 / NBRC 100824 / MB4) (Thermoanaerobacter tengcongensis).